A 700-amino-acid polypeptide reads, in one-letter code: Phenoloxidase 8 (700 aa).

Positions Met-1–Arg-51 are excised as a propeptide. Asn-64 and Asn-198 each carry an N-linked (GlcNAc...) asparagine glycan. Residues His-223, His-227, and His-252 each contribute to the Cu cation site. Residue Asn-295 is glycosylated (N-linked (GlcNAc...) asparagine). Catalysis depends on Glu-364, which acts as the Proton acceptor. Residues His-379, His-383, and His-419 each contribute to the Cu cation site. 3 N-linked (GlcNAc...) asparagine glycosylation sites follow: Asn-445, Asn-507, and Asn-565. 2 disulfides stabilise this stretch: Cys-592-Cys-636 and Cys-594-Cys-643.

This sequence belongs to the tyrosinase family. In terms of assembly, homodimer. The cofactor is Cu(2+). Post-translationally, upon activation, a trypsin type protease cleaves prophenol oxidase to yield the active enzyme.

It localises to the secreted. It catalyses the reaction 2 tyramine + O2 = 2 dopamine. The enzyme catalyses 2 dopamine + O2 = 2 dopamine quinone + 2 H2O. This is a copper-containing oxidase that functions in the formation of pigments such as melanins and other polyphenolic compounds. Catalyzes the oxidation of o-diphenols such as dopamine. Also oxidizes monophenols such as tyramine. This chain is Phenoloxidase 8, found in Anopheles gambiae (African malaria mosquito).